Here is a 320-residue protein sequence, read N- to C-terminus: Meso-diaminopimelate D-dehydrogenase (320 aa).

Residues 11–14 (YGNL), 35–37 (SRR), 65–68 (CMGS), 88–90 (TYD), and 117–121 (TGWDP) each bind NADP(+). Residues Asp90, Asp120, Trp144, 150–151 (QG), Thr169, Arg195, His244, and Asn270 each bind substrate.

As to quaternary structure, homodimer.

The enzyme catalyses meso-2,6-diaminopimelate + NADP(+) + H2O = (S)-2-amino-6-oxoheptanedioate + NH4(+) + NADPH + H(+). Its pathway is amino-acid biosynthesis; L-lysine biosynthesis via DAP pathway; DL-2,6-diaminopimelate from (S)-tetrahydrodipicolinate: step 1/1. Its activity is regulated as follows. L,L-2,6-diaminopimelate and D,D-2,6-diaminopimelate competitively inhibit the oxidative deamination of meso-2,6-diaminopimelate. The enzyme is also inhibited by L-cysteine, and by p-chloromercuribenzoate, iodoacetic acid and HgCl(2) in vitro. Its function is as follows. Catalyzes the reversible NADPH-dependent reductive amination of L-2-amino-6-oxopimelate, the acyclic form of L-tetrahydrodipicolinate, to generate the meso compound, D,L-2,6-diaminopimelate. Probably plays a role in lysine biosynthesis. Exhibits a high substrate specificity for meso-2,6-diaminopimelate, since L,L-2,6-diaminopimelate, D,D-2,6-diaminopimelate, L-glutamate, L-alanine, L-leucine, L-valine, L-aspartate, L-threonine, L-homoserine, L-methionine, L-lysine, L-serine, L-phenylalanine, L-tyrosine, L-tryptophan, L-ornithine, L-histidine, L-arginine, D-glutamate, and D-alanine are not substrates for the oxidative deamination reaction. Can use NAD(+) only poorly since the activity observed in the presence of NAD(+) is about 3% of that with NADP(+). This Corynebacterium glutamicum (strain ATCC 13032 / DSM 20300 / JCM 1318 / BCRC 11384 / CCUG 27702 / LMG 3730 / NBRC 12168 / NCIMB 10025 / NRRL B-2784 / 534) protein is Meso-diaminopimelate D-dehydrogenase (ddh).